Reading from the N-terminus, the 140-residue chain is uncharacterized protein (140 aa).

4 consecutive transmembrane segments (helical) span residues 4 to 24, 56 to 76, 84 to 104, and 109 to 129; these read LLLA…SFSG, EAFI…YLLW, SAAA…LFFS, and IRDV…YVLA.

Its subcellular location is the cell membrane. May be important for peptidoglycan remodeling. This is an uncharacterized protein from Bacillus subtilis (strain 168).